The primary structure comprises 393 residues: Ig heavy chain C region (393 aa).

Ig-like domains lie at 63-157, 168-260, and 270-370; these read PTVI…RNIT, PVIK…ASIH, and PSVS…RTVN. Asparagine 119, asparagine 155, asparagine 200, asparagine 230, asparagine 329, asparagine 366, asparagine 370, and asparagine 380 each carry an N-linked (GlcNAc...) asparagine glycan.

The sequence is that of Ig heavy chain C region from Heterodontus francisci (Horn shark).